Consider the following 336-residue polypeptide: Galactose/methyl galactoside import permease protein MglC (336 aa).

Transmembrane regions (helical) follow at residues 17 to 37, 53 to 73, 107 to 127, 128 to 148, 181 to 201, 227 to 247, 257 to 277, 279 to 299, and 306 to 326; these read GIYV…PTFL, IIIA…LSAG, LVIL…GIII, AYLN…VYGI, FRLS…WVLW, VALN…FGGL, TNNL…VGGV, FSGG…FTVI, and IGVN…FAVA.

It belongs to the binding-protein-dependent transport system permease family. AraH/RbsC subfamily. The complex is composed of one ATP-binding protein (MglA), two transmembrane proteins (MglC) and a solute-binding protein (MglB).

The protein resides in the cell inner membrane. Part of the ABC transporter complex MglABC involved in galactose/methyl galactoside import. Probably responsible for the translocation of the substrate across the membrane. The chain is Galactose/methyl galactoside import permease protein MglC (mglC) from Salmonella typhimurium (strain LT2 / SGSC1412 / ATCC 700720).